The primary structure comprises 231 residues: Maleylacetoacetate isomerase maiA (231 aa).

Positions 7–93 (PKVTLYTYFR…YLEEITPASS (87 aa)) constitute a GST N-terminal domain. In terms of domain architecture, GST C-terminal spans 102–224 (NPEARAVVRT…HWRTQPDTPE (123 aa)).

Belongs to the GST superfamily. Zeta family.

It catalyses the reaction 4-maleylacetoacetate = 4-fumarylacetoacetate. Its pathway is amino-acid degradation; L-phenylalanine degradation; acetoacetate and fumarate from L-phenylalanine: step 5/6. Maleylacetoacetate isomerase; part of the L-tyrosine degradation gene cluster that mediates the biosynthesis of the brownish pigment pyomelanin as an alternative melanin. The 4-hydroxyphenylpyruvate dioxygenase hppD catalyzes the conversion of 4-hydroxyphenylpyruvate to homogentisic acid (HGA). The protein hmgX is crucial for this conversion and thus, probably functions as an accessory factor to mediate specific activity of hppD. The homogentisate 1,2-dioxygenase hmgA is then involved in the cleavage of the aromatic ring of HGA and its conversion to 4-maleylacetoacetate. When hmgA activity is lowered by the cell wall integrity (CWI) signaling pathway, HGA accumulates and leads to the production of pyomelanin through benzoquinone acetic acid after oxidation and polymerization. On the opposite, in non-stress conditions, both hppD and hmgA activities are balanced and HGA is degraded into 4-maleylacetoacetate. 4-maleylacetoacetate is further converted to 4-fumarylacetoacetate by the maleylacetoacetate isomerase maiA, which is degraded into fumarate and acetoacetate by the fumarylacetoacetase fahA. The polypeptide is Maleylacetoacetate isomerase maiA (Aspergillus fumigatus (strain ATCC MYA-4609 / CBS 101355 / FGSC A1100 / Af293) (Neosartorya fumigata)).